A 219-amino-acid polypeptide reads, in one-letter code: Small ribosomal subunit protein uS3 (219 aa).

A KH type-2 domain is found at 38 to 107; that stretch reads IREYIENKMK…RVHINVVEVK (70 aa).

Belongs to the universal ribosomal protein uS3 family. Part of the 30S ribosomal subunit. Forms a tight complex with proteins S10 and S14.

In terms of biological role, binds the lower part of the 30S subunit head. Binds mRNA in the 70S ribosome, positioning it for translation. This chain is Small ribosomal subunit protein uS3, found in Exiguobacterium sp. (strain ATCC BAA-1283 / AT1b).